A 148-amino-acid chain; its full sequence is Urease accessory protein UreE (148 aa).

The protein belongs to the UreE family.

It localises to the cytoplasm. Involved in urease metallocenter assembly. Binds nickel. Probably functions as a nickel donor during metallocenter assembly. This chain is Urease accessory protein UreE, found in Halalkalibacterium halodurans (strain ATCC BAA-125 / DSM 18197 / FERM 7344 / JCM 9153 / C-125) (Bacillus halodurans).